The following is a 193-amino-acid chain: Cuticle protein 18.7 (193 aa).

Component of the cuticle of migratory locust which contains more than 100 different structural proteins. The chain is Cuticle protein 18.7 from Locusta migratoria (Migratory locust).